We begin with the raw amino-acid sequence, 457 residues long: Phosphomethylpyrimidine synthase (457 aa).

Residues Asn-88, Met-117, Tyr-146, His-182, 204 to 206 (SRG), 245 to 248 (DACR), and Glu-284 contribute to the substrate site. A Zn(2+)-binding site is contributed by His-288. Tyr-311 serves as a coordination point for substrate. His-352 serves as a coordination point for Zn(2+). [4Fe-4S] cluster contacts are provided by Cys-428, Cys-431, and Cys-435.

The protein belongs to the ThiC family. It depends on [4Fe-4S] cluster as a cofactor.

The catalysed reaction is 5-amino-1-(5-phospho-beta-D-ribosyl)imidazole + S-adenosyl-L-methionine = 4-amino-2-methyl-5-(phosphooxymethyl)pyrimidine + CO + 5'-deoxyadenosine + formate + L-methionine + 3 H(+). Its pathway is cofactor biosynthesis; thiamine diphosphate biosynthesis. In terms of biological role, catalyzes the synthesis of the hydroxymethylpyrimidine phosphate (HMP-P) moiety of thiamine from aminoimidazole ribotide (AIR) in a radical S-adenosyl-L-methionine (SAM)-dependent reaction. The polypeptide is Phosphomethylpyrimidine synthase (Clostridium tetani (strain Massachusetts / E88)).